The primary structure comprises 638 residues: Chaperone protein DnaK (638 aa).

Residue T196 is modified to Phosphothreonine; by autocatalysis. The interval 592-638 (ASNLYQQPGAEAGAAPQPETNGQQESKGGDGAVNAEYEVIDGDDDKK) is disordered. A compositionally biased stretch (low complexity) spans 597-610 (QQPGAEAGAAPQPE). A compositionally biased stretch (acidic residues) spans 629-638 (EVIDGDDDKK).

Belongs to the heat shock protein 70 family.

Functionally, acts as a chaperone. The sequence is that of Chaperone protein DnaK from Chlorobaculum parvum (strain DSM 263 / NCIMB 8327) (Chlorobium vibrioforme subsp. thiosulfatophilum).